Here is a 258-residue protein sequence, read N- to C-terminus: Imidazole glycerol phosphate synthase subunit HisF (258 aa).

Residues D11 and D130 contribute to the active site.

The protein belongs to the HisA/HisF family. In terms of assembly, heterodimer of HisH and HisF.

It localises to the cytoplasm. The enzyme catalyses 5-[(5-phospho-1-deoxy-D-ribulos-1-ylimino)methylamino]-1-(5-phospho-beta-D-ribosyl)imidazole-4-carboxamide + L-glutamine = D-erythro-1-(imidazol-4-yl)glycerol 3-phosphate + 5-amino-1-(5-phospho-beta-D-ribosyl)imidazole-4-carboxamide + L-glutamate + H(+). Its pathway is amino-acid biosynthesis; L-histidine biosynthesis; L-histidine from 5-phospho-alpha-D-ribose 1-diphosphate: step 5/9. In terms of biological role, IGPS catalyzes the conversion of PRFAR and glutamine to IGP, AICAR and glutamate. The HisF subunit catalyzes the cyclization activity that produces IGP and AICAR from PRFAR using the ammonia provided by the HisH subunit. This chain is Imidazole glycerol phosphate synthase subunit HisF, found in Xanthobacter autotrophicus (strain ATCC BAA-1158 / Py2).